The sequence spans 126 residues: Late histone H2A.L3 (126 aa).

The tract at residues 1-20 is disordered; it reads MSGRGKGAGKARAKAKSRSA. Serine 2 is modified (N-acetylserine). Position 2 is a phosphoserine (serine 2). Over residues 7 to 19 the composition is skewed to basic residues; sequence GAGKARAKAKSRS. Glutamine 105 is modified (N5-methylglutamine). A Glycyl lysine isopeptide (Lys-Gly) (interchain with G-Cter in ubiquitin) cross-link involves residue lysine 120.

The protein belongs to the histone H2A family. As to quaternary structure, the nucleosome is a histone octamer containing two molecules each of H2A, H2B, H3 and H4 assembled in one H3-H4 heterotetramer and two H2A-H2B heterodimers. The octamer wraps approximately 147 bp of DNA. Post-translationally, monoubiquitination of Lys-120 gives a specific tag for epigenetic transcriptional repression. Phosphorylation of Ser-2 directly represses transcription.

It localises to the nucleus. Its subcellular location is the chromosome. Functionally, core component of nucleosome. Nucleosomes wrap and compact DNA into chromatin, limiting DNA accessibility to the cellular machineries which require DNA as a template. Histones thereby play a central role in transcription regulation, DNA repair, DNA replication and chromosomal stability. DNA accessibility is regulated via a complex set of post-translational modifications of histones, also called histone code, and nucleosome remodeling. In Strongylocentrotus purpuratus (Purple sea urchin), this protein is Late histone H2A.L3.